A 300-amino-acid chain; its full sequence is tRNA pseudouridine synthase B (300 aa).

The Nucleophile role is filled by aspartate 38.

This sequence belongs to the pseudouridine synthase TruB family. Type 1 subfamily.

The enzyme catalyses uridine(55) in tRNA = pseudouridine(55) in tRNA. Functionally, responsible for synthesis of pseudouridine from uracil-55 in the psi GC loop of transfer RNAs. The chain is tRNA pseudouridine synthase B from Anaplasma phagocytophilum (strain HZ).